The chain runs to 215 residues: Ribose-5-phosphate isomerase A (215 aa).

Residues 26–29 (TGST), 79–82 (DGAD), and 92–95 (KGGG) contribute to the substrate site. Glu-101 serves as the catalytic Proton acceptor. Residue Lys-119 participates in substrate binding.

The protein belongs to the ribose 5-phosphate isomerase family. Homodimer.

It carries out the reaction aldehydo-D-ribose 5-phosphate = D-ribulose 5-phosphate. Its pathway is carbohydrate degradation; pentose phosphate pathway; D-ribose 5-phosphate from D-ribulose 5-phosphate (non-oxidative stage): step 1/1. Functionally, catalyzes the reversible conversion of ribose-5-phosphate to ribulose 5-phosphate. The chain is Ribose-5-phosphate isomerase A from Xylella fastidiosa (strain Temecula1 / ATCC 700964).